Reading from the N-terminus, the 496-residue chain is Cyclin-dependent kinase 16 (496 aa).

The segment at 1–97 is disordered; sequence MDRMKKIKRQ…TSSDEVQSPV (97 aa). At serine 12 the chain carries Phosphoserine; by BRSK2. Phosphoserine occurs at positions 36, 42, 64, 65, 78, 82, and 89. The segment covering 69–78 has biased composition (basic and acidic residues); sequence IVHEDLKMGS. Residues 83–93 are compositionally biased toward polar residues; the sequence is DQASATSSDEV. Serine 95 carries the post-translational modification Phosphoserine; by CDK5. A phosphoserine mark is found at serine 110, serine 119, serine 138, serine 146, serine 153, and serine 155. The Protein kinase domain occupies 165–446; that stretch reads YIKLDKLGEG…AEDAMKHPFF (282 aa). ATP is bound by residues 171–179 and lysine 194; that span reads LGEGTYATV. Position 175 is a phosphothreonine (threonine 175). The Proton acceptor role is filled by aspartate 286. Threonine 380 is modified (phosphothreonine). Phosphoserine is present on residues serine 391, serine 478, and serine 480.

The protein belongs to the protein kinase superfamily. CMGC Ser/Thr protein kinase family. CDC2/CDKX subfamily. As to quaternary structure, found in a complex containing CABLES1, CDK17 and TDRD7. Interacts with BRSK2. Identified in a complex with NSF, syntaxin-1, synaptotagmin, SYN1, SYP and CDK5R1. Interacts with YWHAH, YWHAQ and YWHAZ. Interacts with CCNY; this interaction increases the CDK16 kinase activity. Interacts with CCNYL1; this interaction mutually increases the stability of CDK16 and CCNYL1 and increases the kinase activity of CDK16. Interacts with NSF. Post-translationally, phosphorylation of CDK16 is essential for the binding of CCNY, but also essential for the regulation of CDK16 kinase activity. Phosphorylation of CDK16 is essential for the binding of CCNYl1, but also essential for the regulation of CDK16 kinase activity. Ser-146 and Ser-153 are the most critical sites for the binding of CCNYL1 and for modulating CDK16 kinase activity. Phosphorylation at Ser-153 inhibits kinase activity. In terms of tissue distribution, detected in pancreas islets (at protein level). Detected in brain and pancreas.

Its subcellular location is the cytoplasm. The protein resides in the cytoplasmic vesicle. It localises to the secretory vesicle. It is found in the cell membrane. The protein localises to the synapse. Its subcellular location is the synaptosome. The catalysed reaction is L-seryl-[protein] + ATP = O-phospho-L-seryl-[protein] + ADP + H(+). It catalyses the reaction L-threonyl-[protein] + ATP = O-phospho-L-threonyl-[protein] + ADP + H(+). Functionally, protein kinase that plays a role in vesicle-mediated transport processes and exocytosis. Regulates GH1 release by brain neurons. Phosphorylates NSF, and thereby regulates NSF oligomerization. Required for normal spermatogenesis. Regulates neuron differentiation and dendrite development. Plays a role in the regulation of insulin secretion in response to changes in blood glucose levels. Can phosphorylate CCNY at 'Ser-336' (in vitro). This chain is Cyclin-dependent kinase 16 (CDK16), found in Homo sapiens (Human).